We begin with the raw amino-acid sequence, 121 residues long: Large ribosomal subunit protein bL20 (121 aa).

It belongs to the bacterial ribosomal protein bL20 family.

Functionally, binds directly to 23S ribosomal RNA and is necessary for the in vitro assembly process of the 50S ribosomal subunit. It is not involved in the protein synthesizing functions of that subunit. This is Large ribosomal subunit protein bL20 from Ruegeria pomeroyi (strain ATCC 700808 / DSM 15171 / DSS-3) (Silicibacter pomeroyi).